The chain runs to 147 residues: D-aminoacyl-tRNA deacylase (147 aa).

Residues 136 to 137 (GP) carry the Gly-cisPro motif, important for rejection of L-amino acids motif.

It belongs to the DTD family. Homodimer.

The protein localises to the cytoplasm. It catalyses the reaction glycyl-tRNA(Ala) + H2O = tRNA(Ala) + glycine + H(+). The enzyme catalyses a D-aminoacyl-tRNA + H2O = a tRNA + a D-alpha-amino acid + H(+). Functionally, an aminoacyl-tRNA editing enzyme that deacylates mischarged D-aminoacyl-tRNAs. Also deacylates mischarged glycyl-tRNA(Ala), protecting cells against glycine mischarging by AlaRS. Acts via tRNA-based rather than protein-based catalysis; rejects L-amino acids rather than detecting D-amino acids in the active site. By recycling D-aminoacyl-tRNA to D-amino acids and free tRNA molecules, this enzyme counteracts the toxicity associated with the formation of D-aminoacyl-tRNA entities in vivo and helps enforce protein L-homochirality. The polypeptide is D-aminoacyl-tRNA deacylase (Streptococcus equi subsp. equi (strain 4047)).